Consider the following 330-residue polypeptide: Beta-hexosaminidase (330 aa).

Substrate-binding positions include aspartate 62, arginine 70, arginine 133, and 163 to 164 (KH). Histidine 176 functions as the Proton donor/acceptor in the catalytic mechanism. Aspartate 246 serves as the catalytic Nucleophile.

It belongs to the glycosyl hydrolase 3 family. NagZ subfamily.

It localises to the cytoplasm. The enzyme catalyses Hydrolysis of terminal non-reducing N-acetyl-D-hexosamine residues in N-acetyl-beta-D-hexosaminides.. Its pathway is cell wall biogenesis; peptidoglycan recycling. Its function is as follows. Plays a role in peptidoglycan recycling by cleaving the terminal beta-1,4-linked N-acetylglucosamine (GlcNAc) from peptide-linked peptidoglycan fragments, giving rise to free GlcNAc, anhydro-N-acetylmuramic acid and anhydro-N-acetylmuramic acid-linked peptides. This is Beta-hexosaminidase from Idiomarina loihiensis (strain ATCC BAA-735 / DSM 15497 / L2-TR).